The following is a 223-amino-acid chain: Small ribosomal subunit protein uS3 (223 aa).

The KH type-2 domain maps to 39 to 115 (IRKYIEKNLA…RVFINIVEIK (77 aa)).

It belongs to the universal ribosomal protein uS3 family. As to quaternary structure, part of the 30S ribosomal subunit. Forms a tight complex with proteins S10 and S14.

Functionally, binds the lower part of the 30S subunit head. Binds mRNA in the 70S ribosome, positioning it for translation. The chain is Small ribosomal subunit protein uS3 from Leuconostoc citreum (strain KM20).